We begin with the raw amino-acid sequence, 936 residues long: Isoleucine--tRNA ligase (936 aa).

The short motif at 58-68 (PYANGNIHIGH) is the 'HIGH' region element. Glu-560 is an L-isoleucyl-5'-AMP binding site. Residues 601-605 (KMSKS) carry the 'KMSKS' region motif. Lys-604 is an ATP binding site. Zn(2+)-binding residues include Cys-899, Cys-902, Cys-919, and Cys-922.

It belongs to the class-I aminoacyl-tRNA synthetase family. IleS type 1 subfamily. Monomer. Requires Zn(2+) as cofactor.

It localises to the cytoplasm. It catalyses the reaction tRNA(Ile) + L-isoleucine + ATP = L-isoleucyl-tRNA(Ile) + AMP + diphosphate. Its function is as follows. Catalyzes the attachment of isoleucine to tRNA(Ile). As IleRS can inadvertently accommodate and process structurally similar amino acids such as valine, to avoid such errors it has two additional distinct tRNA(Ile)-dependent editing activities. One activity is designated as 'pretransfer' editing and involves the hydrolysis of activated Val-AMP. The other activity is designated 'posttransfer' editing and involves deacylation of mischarged Val-tRNA(Ile). The sequence is that of Isoleucine--tRNA ligase from Proteus mirabilis (strain HI4320).